Reading from the N-terminus, the 401-residue chain is Histone acetyltransferase type B subunit 2 (401 aa).

WD repeat units lie at residues 116-147 (EHEEEITRARYMPQDPNIVATINGQGTVFLYS), 158-189 (FHKDNGYALSFSTLVKGRLLSGSDDHTVALWE), 206-237 (LHSDIINDNKWHNFNKDLFGTVSEDSLLKIND), 249-280 (KCPQPFNTLAFSHHSSNLLAAAGMDSYVYLYD), and 293-324 (GHEDAVNNLEFSTHVDGVVVSSGSDNRLMMWD). An interaction with the histone H4 N-terminus region spans residues 335–339 (DDAED). Residues 350-381 (GHRSSVNDFDLNPQIPWLVASAEEENILQVWK) form a WD 6 repeat.

The protein belongs to the WD repeat RBAP46/RBAP48/MSI1 family. As to quaternary structure, component of the HAT-B complex composed of at least HAT1 and HAT2. In the cytoplasm, this complex binds to the histone H4 tail. In the nucleus, the HAT-B complex has an additional component, the histone H3/H4 chaperone HIF1.

The protein localises to the cytoplasm. The protein resides in the nucleus. Regulatory subunit of the histone acetylase B (HAT-B) complex. The complex acetylates 'Lys-12' of histone H4 which is required for telomeric silencing. HAT2 is required for high affinity binding of the acetyltransferase to histone H4, for the nuclear location of HAT1 and for the HAT1-HIF1 interaction. Alone, it is unable to bind to H4, requiring HAT1 for high affinity interaction with the histone tail. HAT2 also has a HAT1 independent function in life-span regulation. The protein is Histone acetyltransferase type B subunit 2 (HAT2) of Saccharomyces cerevisiae (strain ATCC 204508 / S288c) (Baker's yeast).